The sequence spans 210 residues: Redox-sensing transcriptional repressor Rex (210 aa).

Positions 17-56 (KYHRYLNELMKNDVDRISSKELGEKIGFTASQIRQDLNCF) form a DNA-binding region, H-T-H motif. Position 91-96 (91-96 (GAGNIG)) interacts with NAD(+).

The protein belongs to the transcriptional regulatory Rex family. Homodimer.

Its subcellular location is the cytoplasm. Its function is as follows. Modulates transcription in response to changes in cellular NADH/NAD(+) redox state. The protein is Redox-sensing transcriptional repressor Rex of Clostridium botulinum (strain Eklund 17B / Type B).